A 154-amino-acid chain; its full sequence is MIKIISVGTIKEKYFLQACEEYKKRLSRWVKVEEIEIKEEDENKYFNIETLLEKEADKILKHVKEGEFIIVCDINGIELSSEEFSEILRKNINSSKNITFIIGSSNGLSNEVKRRADLLLSFSKLTFPHQLFRVLLYEQIYRGLSIIYGTKYHK.

S-adenosyl-L-methionine-binding positions include G103 and 122–127 (FSKLTF).

It belongs to the RNA methyltransferase RlmH family. Homodimer.

The protein resides in the cytoplasm. It catalyses the reaction pseudouridine(1915) in 23S rRNA + S-adenosyl-L-methionine = N(3)-methylpseudouridine(1915) in 23S rRNA + S-adenosyl-L-homocysteine + H(+). In terms of biological role, specifically methylates the pseudouridine at position 1915 (m3Psi1915) in 23S rRNA. The protein is Ribosomal RNA large subunit methyltransferase H of Caldicellulosiruptor bescii (strain ATCC BAA-1888 / DSM 6725 / KCTC 15123 / Z-1320) (Anaerocellum thermophilum).